Reading from the N-terminus, the 324-residue chain is Glyoxylate/hydroxypyruvate reductase B (324 aa).

Residues Arg-237 and Glu-266 contribute to the active site. Catalysis depends on His-285, which acts as the Proton donor.

This sequence belongs to the D-isomer specific 2-hydroxyacid dehydrogenase family. GhrB subfamily. As to quaternary structure, homodimer.

The protein resides in the cytoplasm. The enzyme catalyses glycolate + NADP(+) = glyoxylate + NADPH + H(+). It catalyses the reaction (R)-glycerate + NAD(+) = 3-hydroxypyruvate + NADH + H(+). The catalysed reaction is (R)-glycerate + NADP(+) = 3-hydroxypyruvate + NADPH + H(+). Catalyzes the NADPH-dependent reduction of glyoxylate and hydroxypyruvate into glycolate and glycerate, respectively. In Shigella dysenteriae serotype 1 (strain Sd197), this protein is Glyoxylate/hydroxypyruvate reductase B.